The following is a 975-amino-acid chain: E3 ubiquitin-protein ligase NEDD4-like (975 aa).

The residue at position 2 (Ala-2) is an N-acetylalanine. One can recognise a C2 domain in the interval 4 to 126 (GLGEPVYGLS…TEDPTMERPY (123 aa)). Disordered regions lie at residues 178–202 (DSND…WEEK), 244–272 (AAHR…VPEP), and 285–312 (DSLG…EELS). The region spanning 193–226 (PPLPPGWEEKVDNLGRTYYVNHNNRTTQWHRPSL) is the WW 1 domain. Residue Ser-312 is modified to Phosphoserine. A Phosphothreonine modification is found at Thr-318. Ser-342 is modified (phosphoserine; by WNK1 and WNK4). 2 disordered regions span residues 349 to 393 (EQGH…GWEE) and 424 to 496 (GASG…KVTQ). Thr-367 bears the Phosphothreonine; by SGK1 mark. Positions 385 to 418 (PGLPSGWEERKDAKGRTYYVNHNNRTTTWTRPIM) constitute a WW 2 domain. Ser-446 is subject to Phosphoserine. Ser-448 carries the phosphoserine; by PKA and SGK1 modification. Position 449 is a phosphoserine; by WNK1 and WNK4 (Ser-449). The span at 460–471 (GAKDSPVRRAVK) shows a compositional bias: basic and acidic residues. Residues Ser-464, Ser-475, Ser-479, Ser-483, and Ser-487 each carry the phosphoserine modification. 2 WW domains span residues 497 to 530 (SFLP…DPRL) and 548 to 581 (GPLP…DPRL). The HECT domain occupies 640–974 (RPDVLKARLW…VENAQGFEGV (335 aa)). Cys-942 serves as the catalytic Glycyl thioester intermediate.

In terms of assembly, interacts with UBE2E3. Interacts with NDFIP1; this interaction activates the E3 ubiquitin-protein ligase. Interacts with NDFIP2; this interaction activates the E3 ubiquitin-protein ligase. Interacts (via WW domains) with SCN1A. Interacts (via WW domains) with SCN2A. Interacts (via WW domains) with SCN3A. Interacts (via WW domains) with SCN5A. Interacts (via WW domains) with SCN8A. Interacts (via WW domains) with SCN9A. Interacts (via WW domains) with SCN10A. Interacts (via WW domains) with CLCN5. Interacts with SMAD2. Interacts with SMAD3. Interacts with SMAD6. Interacts with SMAD7. The phosphorylated form interacts with 14-3-3 proteins. Interacts with TNK2. Interacts with WNK1. Interacts with SGK1. Interacts (via C2 domain) with NPC2. Interacts with ARRDC4. Interacts with KCNQ1; promotes internalization of KCNQ1. Interacts (via domains WW1, 3 and 4) with USP36; the interaction inhibits ubiquitination of, at least, NTRK1, KCNQ2 and KCNQ3 by NEDD4L. Interacts with PRRG4 (via cytoplasmic domain). Interacts with LDLRAD3; the interaction is direct. Interacts with UBE2D2. Interacts with TTYH2 and TTYH3. (Microbial infection) Interacts with Epstein-Barr virus LMP2A. Phosphorylated by SGK1 or PKA; which impairs interaction with SCNN. Interaction with YWHAH inhibits dephosphorylation. Post-translationally, auto-ubiquitinated. Deubiquitinated by USP36, no effect on NEDD4L protein levels. Both proteins interact and regulate each other's ubiquitination levels. In terms of tissue distribution, ubiquitously expressed, with highest levels in prostate, pancreas, and kidney. Expressed in melanocytes.

The protein resides in the cytoplasm. It is found in the golgi apparatus. It localises to the endosome. Its subcellular location is the multivesicular body. The enzyme catalyses S-ubiquitinyl-[E2 ubiquitin-conjugating enzyme]-L-cysteine + [acceptor protein]-L-lysine = [E2 ubiquitin-conjugating enzyme]-L-cysteine + N(6)-ubiquitinyl-[acceptor protein]-L-lysine.. The catalysed reaction is [E2 ubiquitin-conjugating enzyme]-S-ubiquitinyl-L-cysteine + [acceptor protein]-L-cysteine = [E2 ubiquitin-conjugating enzyme]-L-cysteine + [acceptor protein]-S-ubiquitinyl-L-cysteine.. It functions in the pathway protein modification; protein ubiquitination. Activated by NDFIP1- and NDFIP2-binding. E3 ubiquitin-protein ligase that mediates the polyubiquitination of lysine and cysteine residues on target proteins and is thereby implicated in the regulation of various signaling pathways including autophagy, innate immunity or DNA repair. Inhibits TGF-beta signaling by triggering SMAD2 and TGFBR1 ubiquitination and proteasome-dependent degradation. Downregulates autophagy and cell growth by ubiquitinating and reducing cellular ULK1 or ASCT2 levels. Promotes ubiquitination and internalization of various plasma membrane channels such as ENaC, SCN2A/Nav1.2, SCN3A/Nav1.3, SCN5A/Nav1.5, SCN9A/Nav1.7, SCN10A/Nav1.8, KCNA3/Kv1.3, KCNH2, EAAT1, KCNQ2/Kv7.2, KCNQ3/Kv7.3 or CLC5. Promotes ubiquitination and degradation of SGK1 and TNK2. Ubiquitinates BRAT1 and this ubiquitination is enhanced in the presence of NDFIP1. Plays a role in dendrite formation by melanocytes. Involved in the regulation of TOR signaling. Ubiquitinates and regulates protein levels of NTRK1 once this one is activated by NGF. Plays a role in antiviral innate immunity by catalyzing 'Lys-29'-linked cysteine ubiquitination of TRAF3, resulting in enhanced 'Lys-48' and 'Lys-63'-linked ubiquitination of TRAF3. Ubiquitinates TTYH2 and TTYH3 and regulates protein levels of TTYH2. The chain is E3 ubiquitin-protein ligase NEDD4-like from Homo sapiens (Human).